The following is a 321-amino-acid chain: Aspartate carbamoyltransferase catalytic subunit (321 aa).

The carbamoyl phosphate site is built by R65 and T66. An L-aspartate-binding site is contributed by K93. Carbamoyl phosphate is bound by residues R115, H143, and Q146. Residues R176 and R230 each contribute to the L-aspartate site. The carbamoyl phosphate site is built by G271 and P272.

The protein belongs to the aspartate/ornithine carbamoyltransferase superfamily. ATCase family. Heterododecamer (2C3:3R2) of six catalytic PyrB chains organized as two trimers (C3), and six regulatory PyrI chains organized as three dimers (R2).

The enzyme catalyses carbamoyl phosphate + L-aspartate = N-carbamoyl-L-aspartate + phosphate + H(+). The protein operates within pyrimidine metabolism; UMP biosynthesis via de novo pathway; (S)-dihydroorotate from bicarbonate: step 2/3. Catalyzes the condensation of carbamoyl phosphate and aspartate to form carbamoyl aspartate and inorganic phosphate, the committed step in the de novo pyrimidine nucleotide biosynthesis pathway. This chain is Aspartate carbamoyltransferase catalytic subunit, found in Bartonella tribocorum (strain CIP 105476 / IBS 506).